The primary structure comprises 468 residues: UDP-N-acetylmuramoylalanine--D-glutamate ligase (468 aa).

ATP is bound at residue 117 to 123; the sequence is GTDGKTT.

This sequence belongs to the MurCDEF family.

Its subcellular location is the cytoplasm. The enzyme catalyses UDP-N-acetyl-alpha-D-muramoyl-L-alanine + D-glutamate + ATP = UDP-N-acetyl-alpha-D-muramoyl-L-alanyl-D-glutamate + ADP + phosphate + H(+). It functions in the pathway cell wall biogenesis; peptidoglycan biosynthesis. Functionally, cell wall formation. Catalyzes the addition of glutamate to the nucleotide precursor UDP-N-acetylmuramoyl-L-alanine (UMA). The chain is UDP-N-acetylmuramoylalanine--D-glutamate ligase from Chloroherpeton thalassium (strain ATCC 35110 / GB-78).